The sequence spans 70 residues: Large ribosomal subunit protein bL32 (70 aa).

The segment covering 1-19 (MAVPKRKTTPSRRGMRRSH) has biased composition (basic residues). The disordered stretch occupies residues 1–21 (MAVPKRKTTPSRRGMRRSHQA).

It belongs to the bacterial ribosomal protein bL32 family.

The chain is Large ribosomal subunit protein bL32 from Gluconobacter oxydans (strain 621H) (Gluconobacter suboxydans).